We begin with the raw amino-acid sequence, 185 residues long: Elongation factor P (185 aa).

The protein belongs to the elongation factor P family.

It localises to the cytoplasm. It functions in the pathway protein biosynthesis; polypeptide chain elongation. Functionally, involved in peptide bond synthesis. Stimulates efficient translation and peptide-bond synthesis on native or reconstituted 70S ribosomes in vitro. Probably functions indirectly by altering the affinity of the ribosome for aminoacyl-tRNA, thus increasing their reactivity as acceptors for peptidyl transferase. The sequence is that of Elongation factor P from Dictyoglomus turgidum (strain DSM 6724 / Z-1310).